The following is a 521-amino-acid chain: MLDTNMKTQLKAYLEKLTKPVELIATLDDSAKSAEIKELLAEIAELSDKVTFKEDNSLPVRKPSFLITNPGSNQGPRFAGSPLGHEFTSLVLALLWTGGHPSKEAQSLLEQIRHIDGDFEFETYYSLSCHNCPDVVQALNLMSVLNPRIKHTAIDGGTFQNEITDRNVMGVPAVFVNGKEFGQGRMTLTEIVAKIDTGAEKRAAEELNKRDAYDVLIVGSGPAGAAAAIYSARKGIRTGLMGERFGGQILDTVDIENYISVPKTEGQKLAGALKVHVDEYDVDVIDSQSASKLIPAAVEGGLHQIETASGAVLKARSIIVATGAKWRNMNVPGEDQYRTKGVTYCPHCDGPLFKGKRVAVIGGGNSGVEAAIDLAGIVEHVTLLEFAPEMKADQVLQDKLRSLKNVDIILNAQTTEVKGDGSKVVGLEYRDRVSGDIHNIELAGIFVQIGLLPNTNWLEGAVERNRMGEIIIDAKCETNVKGVFAAGDCTTVPYKQIIIATGEGAKASLSAFDYLIRTKTA.

N6-acetyllysine is present on lysine 53. FAD is bound at residue aspartate 214 to isoleucine 229. Cysteine 345 and cysteine 348 form a disulfide bridge. Lysine 354 carries the N6-acetyllysine modification. Arginine 357–alanine 371 contributes to the NAD(+) binding site. Threonine 478–aspartate 488 contacts FAD.

This sequence belongs to the class-II pyridine nucleotide-disulfide oxidoreductase family. Homodimer. Requires FAD as cofactor.

In terms of biological role, serves to protect the cell against DNA damage by alkyl hydroperoxides. It can use either NADH or NADPH as electron donor for direct reduction of redox dyes or of alkyl hydroperoxides when combined with the AhpC protein. The protein is Alkyl hydroperoxide reductase subunit F (ahpF) of Escherichia coli (strain K12).